The chain runs to 179 residues: Transcription initiation factor TFIID subunit 10 (179 aa).

The tract at residues 1 to 23 (MNDPEQYEPSSSTESVLMPPPAL) is disordered.

It belongs to the TAF10 family. Component of the TFIID basal transcription factor complex, composed of TATA-box-binding protein tbp-1, and a number of TBP-associated factors (TAFs).

The protein localises to the nucleus. In terms of biological role, the TFIID basal transcription factor complex plays a major role in the initiation of RNA polymerase II (Pol II)-dependent transcription. TFIID recognizes and binds promoters via its subunit tbp-1, a TATA-box-binding protein, and promotes assembly of the pre-initiation complex (PIC). The TFIID complex consists of tbp-1 and TBP-associated factors (TAFs), including taf-10. Essential for early embryonic development, but not required for transcription of some genes; probably acts via activating transcription initiation by RNA Pol II, as part of the TFIID complex. This Caenorhabditis elegans protein is Transcription initiation factor TFIID subunit 10.